A 359-amino-acid chain; its full sequence is Phospho-N-acetylmuramoyl-pentapeptide-transferase (359 aa).

10 consecutive transmembrane segments (helical) span residues 7-27 (RSLT…VNSY), 28-48 (IFNS…SLVI), 82-102 (MGGI…NNYV), 103-123 (DSVG…IGFL), 147-167 (ALIA…NPLI), 179-199 (IVIF…VNLT), 203-223 (DGLA…EIFI), 229-249 (LIIY…FLKY), 256-276 (IFMG…ISIL), and 337-357 (IVEN…VLKI).

This sequence belongs to the glycosyltransferase 4 family. MraY subfamily. Mg(2+) serves as cofactor.

The protein resides in the cell inner membrane. The catalysed reaction is UDP-N-acetyl-alpha-D-muramoyl-L-alanyl-gamma-D-glutamyl-meso-2,6-diaminopimeloyl-D-alanyl-D-alanine + di-trans,octa-cis-undecaprenyl phosphate = di-trans,octa-cis-undecaprenyl diphospho-N-acetyl-alpha-D-muramoyl-L-alanyl-D-glutamyl-meso-2,6-diaminopimeloyl-D-alanyl-D-alanine + UMP. It functions in the pathway cell wall biogenesis; peptidoglycan biosynthesis. Catalyzes the initial step of the lipid cycle reactions in the biosynthesis of the cell wall peptidoglycan: transfers peptidoglycan precursor phospho-MurNAc-pentapeptide from UDP-MurNAc-pentapeptide onto the lipid carrier undecaprenyl phosphate, yielding undecaprenyl-pyrophosphoryl-MurNAc-pentapeptide, known as lipid I. This is Phospho-N-acetylmuramoyl-pentapeptide-transferase from Prochlorococcus marinus subsp. pastoris (strain CCMP1986 / NIES-2087 / MED4).